The following is a 257-amino-acid chain: Isoprenyl transferase (257 aa).

Asp-33 is a catalytic residue. Asp-33 contributes to the Mg(2+) binding site. Substrate is bound by residues Gly-34 to Arg-37, Trp-38, Arg-46, His-50, and Ser-78 to Glu-80. Asn-81 serves as the catalytic Proton acceptor. Substrate contacts are provided by residues Trp-82, Arg-84, Arg-204, and Arg-210–Ser-212. Residue Glu-223 coordinates Mg(2+).

Belongs to the UPP synthase family. As to quaternary structure, homodimer. Mg(2+) serves as cofactor.

Catalyzes the condensation of isopentenyl diphosphate (IPP) with allylic pyrophosphates generating different type of terpenoids. The chain is Isoprenyl transferase from Clostridium acetobutylicum (strain ATCC 824 / DSM 792 / JCM 1419 / IAM 19013 / LMG 5710 / NBRC 13948 / NRRL B-527 / VKM B-1787 / 2291 / W).